A 471-amino-acid polypeptide reads, in one-letter code: T-box transcription factor T (471 aa).

The T-box DNA-binding region spans 24 to 196 (LWTKFCSLTN…HNPFAKAFLD (173 aa)).

Developing notochord.

It localises to the nucleus. Involved in the transcriptional regulation of genes required for mesoderm differentiation. This chain is T-box transcription factor T, found in Halocynthia roretzi (Sea squirt).